The chain runs to 392 residues: L-rhamnonate dehydratase (392 aa).

Substrate is bound by residues His-22 and Arg-48. The Mg(2+) site is built by Asp-214, Glu-240, and Glu-268. Catalysis depends on His-318, which acts as the Proton acceptor. Glu-338 provides a ligand contact to substrate.

It belongs to the mandelate racemase/muconate lactonizing enzyme family. RhamD subfamily. In terms of assembly, homooctamer; tetramer of dimers. It depends on Mg(2+) as a cofactor.

It carries out the reaction L-rhamnonate = 2-dehydro-3-deoxy-L-rhamnonate + H2O. Catalyzes the dehydration of L-rhamnonate to 2-keto-3-deoxy-L-rhamnonate (KDR). The polypeptide is L-rhamnonate dehydratase (Burkholderia ambifaria (strain ATCC BAA-244 / DSM 16087 / CCUG 44356 / LMG 19182 / AMMD) (Burkholderia cepacia (strain AMMD))).